A 283-amino-acid chain; its full sequence is Putative sugar uptake protein BA_0200/GBAA_0200/BAS0200 (283 aa).

Transmembrane regions (helical) follow at residues 4-21, 26-48, 52-71, 84-106, 110-132, 151-173, 178-195, 208-230, 234-253, and 260-279; these read LLAL…LVSV, GAYS…MYVF, ALTM…WALG, VSTT…GVIA, WTTT…GVVF, LLTL…WYNI, AILP…VLTS, ALSG…RVGV, FPLS…VFLG, and QLIF…VLLG.

This sequence belongs to the GRP transporter (TC 2.A.7.5) family.

The protein resides in the cell membrane. This chain is Putative sugar uptake protein BA_0200/GBAA_0200/BAS0200, found in Bacillus anthracis.